The following is a 673-amino-acid chain: Vasorin (673 aa).

The signal sequence occupies residues 1–23 (MCSRVPLLLPLLLLLALGPGVQG). Residues 24–51 (CPSGCQCSQPQTVFCTARQGTTVPRDVP) enclose the LRRNT domain. The Extracellular segment spans residues 24–575 (CPSGCQCSQP…VTQAREGNLP (552 aa)). 10 LRR repeats span residues 52-74 (PDTVGLYVFENGITMLDAGSFAG), 77-98 (GLQLLDLSQNQIASLPSGVFQP), 101-122 (NLSNLDLTANRLHEITNETFRG), 125-146 (RLERLYLGKNRIRHIQPGAFDT), 149-170 (RLLELKLQDNELRALPPLRLPR), 171-191 (LLLLDLSHNSLLALEPGILDT), 193-214 (NVEALRLAGLGLQQLDEGLFSR), 217-238 (NLHDLDVSDNQLERVPPVIRGL), 240-262 (GLTRLRLAGNTRIAQLRPEDLAG), and 265-287 (ALQELDVSNLSLQALPGDLSGLF). N-linked (GlcNAc...) asparagine glycosylation is present at Asn101. Asn117 carries an N-linked (GlcNAc...) (complex) asparagine glycan. Asn273 is a glycosylation site (N-linked (GlcNAc...) asparagine). The 54-residue stretch at 298–351 (NPFNCVCPLSWFGPWVRESHVTLASPEETRCHFPPKNAGRLLLELDYADFGCPA) folds into the LRRCT domain. Positions 358–370 (VPTTRPVVREPTA) are enriched in low complexity. The interval 358–404 (VPTTRPVVREPTALSSSLAPTWLSPTEPATEAPSPPSTAPPTVGPVP) is disordered. Pro residues predominate over residues 390-404 (PSPPSTAPPTVGPVP). An EGF-like domain is found at 405–442 (QPQDCPPSTCLNGGTCHLGTRHHLACLCPEGFTGLYCE). Disulfide bonds link Cys409–Cys420, Cys414–Cys430, and Cys432–Cys441. Residues 460-558 (PPRSLTLGIE…ACGEAHTPPA (99 aa)) form the Fibronectin type-III domain. Residues Asn500 and Asn528 are each glycosylated (N-linked (GlcNAc...) asparagine). Residues 576–596 (LLIAPALAAVLLAALAAVGAA) form a helical membrane-spanning segment. Residues 597–673 (YCVRRGRAMA…QSPLHAKPYI (77 aa)) are Cytoplasmic-facing.

As to quaternary structure, interacts with TGFB1, TGFB2 and TGFB3. N-glycosylated. N-glycan heterogeneity at Asn-117: Hex5HexNAc4 (minor), dHex1Hex5HexNAc4 (major), Hex6HexNAc5 (minor) and dHex1Hex6HexNAc5 (minor). In terms of tissue distribution, expressed at highest levels in aorta, at intermediate levels in kidney and placenta and at lowest levels in brain, heart, liver, lung and skeletal muscle. Within the aorta, the strongest expression is found in the tunica media of the proximal ascending aorta, the descending thoracic aorta, the abdominal aorta and the coronary arteries. Within the kidney, expression is found in the interstitial cells.

The protein localises to the membrane. It localises to the secreted. Its function is as follows. May act as an inhibitor of TGF-beta signaling. This chain is Vasorin (VASN), found in Homo sapiens (Human).